The primary structure comprises 227 residues: AN1-type zinc finger protein 3 (227 aa).

Residues 12 to 44 (PSLPPRCPCGFWGSSKTMNLCSKCFADFQKKQP) form an A20-type zinc finger. Residues Cys-18, Cys-20, Cys-32, and Cys-35 each coordinate Zn(2+). Disordered regions lie at residues 41 to 100 (KKQP…EECG) and 113 to 148 (PTKR…ETSR). The span at 49 to 59 (APSTSNSQSDL) shows a compositional bias: polar residues. Residues 66 to 77 (SDNNNTSITTPT) show a composition bias toward low complexity. 2 stretches are compositionally biased toward polar residues: residues 78–94 (LSPS…VTSP) and 113–127 (PTKR…SENE). The span at 135–148 (RLLENTERSEETSR) shows a compositional bias: basic and acidic residues. The segment at 151–200 (QKSRRRCFQCQTKLELVQQELGSCRCGYVFCMLHRLPEQHDCTFDHMGRG) adopts an AN1-type zinc-finger fold. The Zn(2+) site is built by Cys-157, Cys-160, Cys-174, Cys-176, Cys-181, His-184, His-190, and Cys-192.

The polypeptide is AN1-type zinc finger protein 3 (ZFAND3) (Homo sapiens (Human)).